A 78-amino-acid chain; its full sequence is uncharacterized protein (78 aa).

The signal sequence occupies residues 1–22 (MFKKSVLFATLLSGVMAFSTNA).

Belongs to the BhsA/McbA family.

Its subcellular location is the periplasm. Its function is as follows. Probably involved in reactive chlorine species (RCS) stress resistance. This is an uncharacterized protein from Escherichia coli (strain K12).